Reading from the N-terminus, the 71-residue chain is Putative RNA-binding regulatory peptide (71 aa).

Interacts with IGF2BP1 (via KH3 and KH4 domains); the interaction results in increased binding of IGF2BP1 to N6-methyladenosine (m6A)-containing mRNAs. As to expression, detected in colon (at protein level).

Enhances binding of IGF2BP1 to N6-methyladenosine (m6A)-containing mRNAs, thereby contributing to increased mRNA stability. Also increases the interaction of IGF2BP1 with RNA stabilizers ELAVL1/HUR, MATR3 and PABPC1, and increases the interaction of RNA stabilizers ELAVL1/HUR, MATR3 and PABPC1 with m6A-containing mRNAs. Contributes to MYC stability by enhancing binding of IGF2BP1 to m6A-containing MYC mRNAs and increasing recruitment of RNA stabilizing proteins to m6A-containing MYC mRNAs. The sequence is that of Putative RNA-binding regulatory peptide from Homo sapiens (Human).